A 245-amino-acid chain; its full sequence is 1-(5-phosphoribosyl)-5-[(5-phosphoribosylamino)methylideneamino] imidazole-4-carboxamide isomerase (245 aa).

D7 acts as the Proton acceptor in catalysis. Residue D129 is the Proton donor of the active site.

The protein belongs to the HisA/HisF family.

Its subcellular location is the cytoplasm. The catalysed reaction is 1-(5-phospho-beta-D-ribosyl)-5-[(5-phospho-beta-D-ribosylamino)methylideneamino]imidazole-4-carboxamide = 5-[(5-phospho-1-deoxy-D-ribulos-1-ylimino)methylamino]-1-(5-phospho-beta-D-ribosyl)imidazole-4-carboxamide. Its pathway is amino-acid biosynthesis; L-histidine biosynthesis; L-histidine from 5-phospho-alpha-D-ribose 1-diphosphate: step 4/9. In Shewanella oneidensis (strain ATCC 700550 / JCM 31522 / CIP 106686 / LMG 19005 / NCIMB 14063 / MR-1), this protein is 1-(5-phosphoribosyl)-5-[(5-phosphoribosylamino)methylideneamino] imidazole-4-carboxamide isomerase.